We begin with the raw amino-acid sequence, 61 residues long: ALYITEECTYCGACEPECPTNAISAGSEIYVIDAAGCTECVGFADAPACAAVCPAECIVQG.

The 4Fe-4S ferredoxin-type domain occupies 2–28 (LYITEECTYCGACEPECPTNAISAGSE). [4Fe-4S] cluster contacts are provided by cysteine 8, cysteine 11, cysteine 14, cysteine 18, cysteine 37, cysteine 40, cysteine 49, and cysteine 53.

The cofactor is [4Fe-4S] cluster.

Ferredoxins are iron-sulfur proteins that transfer electrons in a wide variety of metabolic reactions. The protein is Ferredoxin of Chlorobaculum thiosulfatiphilum (Chlorobium limicola f.sp. thiosulfatophilum).